We begin with the raw amino-acid sequence, 165 residues long: C-phycoerythrin class 2 subunit alpha (165 aa).

Cys75 serves as a coordination point for phycourobilin. The (2R,3E)-phycoerythrobilin site is built by Cys83 and Cys140.

The protein belongs to the phycobiliprotein family. In terms of assembly, heterodimer of an alpha and a beta chain. In terms of processing, contains two covalently linked phycoerythrobilin chromophores and one covalently linked phycourobilin chromophore.

It localises to the cellular thylakoid membrane. Light-harvesting photosynthetic bile pigment-protein from the phycobiliprotein complex. The chain is C-phycoerythrin class 2 subunit alpha (mpeA) from Synechococcus sp. (strain WH8020).